We begin with the raw amino-acid sequence, 561 residues long: Urocanate hydratase (561 aa).

Residues 52 to 53, Gln130, 176 to 178, Glu196, Arg201, 242 to 243, 263 to 267, 273 to 274, and Tyr322 each bind NAD(+); these read GG, GMG, NA, QTSAH, and YL. Residue Cys410 is part of the active site. Gly492 contributes to the NAD(+) binding site.

The protein belongs to the urocanase family. NAD(+) is required as a cofactor.

The protein localises to the cytoplasm. It catalyses the reaction 4-imidazolone-5-propanoate = trans-urocanate + H2O. The protein operates within amino-acid degradation; L-histidine degradation into L-glutamate; N-formimidoyl-L-glutamate from L-histidine: step 2/3. Catalyzes the conversion of urocanate to 4-imidazolone-5-propionate. The chain is Urocanate hydratase from Salmonella typhi.